Reading from the N-terminus, the 397-residue chain is Phosphoglycerate kinase (397 aa).

Substrate contacts are provided by residues 19–21, Arg-35, 58–61, Arg-117, and Arg-150; these read DFN and HLGR. ATP is bound by residues Lys-201, Glu-323, and 349–352; that span reads GGDS.

Belongs to the phosphoglycerate kinase family. Monomer.

It localises to the cytoplasm. The catalysed reaction is (2R)-3-phosphoglycerate + ATP = (2R)-3-phospho-glyceroyl phosphate + ADP. It participates in carbohydrate degradation; glycolysis; pyruvate from D-glyceraldehyde 3-phosphate: step 2/5. The chain is Phosphoglycerate kinase from Syntrophobacter fumaroxidans (strain DSM 10017 / MPOB).